The primary structure comprises 94 residues: Co-chaperonin GroES (94 aa).

Belongs to the GroES chaperonin family. As to quaternary structure, heptamer of 7 subunits arranged in a ring. Interacts with the chaperonin GroEL.

It localises to the cytoplasm. Together with the chaperonin GroEL, plays an essential role in assisting protein folding. The GroEL-GroES system forms a nano-cage that allows encapsulation of the non-native substrate proteins and provides a physical environment optimized to promote and accelerate protein folding. GroES binds to the apical surface of the GroEL ring, thereby capping the opening of the GroEL channel. The protein is Co-chaperonin GroES of Heliobacterium modesticaldum (strain ATCC 51547 / Ice1).